The chain runs to 143 residues: MSSDATNDELHRRLFDEGIKVRKDVLGSEYVENALRNATPFTRPGQELITEWAWGTVWQRPGLDRKQRSLLTLGLIIGQKAWLELGLHTRGAINNGVTELEIREAVLHAAVYCGTPSCIEAMIVTQKTINDMVDKGEYKRPEN.

Belongs to the carboxymuconolactone decarboxylase family. Requires Mg(2+) as cofactor.

Its pathway is mycotoxin biosynthesis. Nitrosuccinic acid decarboxylase; part of the gene cluster that mediates the biosynthesis of the deadly neurotoxic nitroalkane 3-nitropropanoic acid (3-NPA) that acts as an antimetabolite of succinate and irreversibly inhibits succinate dehydrogenase and disrupts mitochondrial oxidative phosphorylation. NpaB facilitates decarboxylation of nitrosuccinic acid produced by the nitrosuccinic acid synthase npaA to yield the final product of the cluster, the lethal mycotoxin 3-NPA. This chain is Nitrosuccinic acid decarboxylase npaB, found in Metarhizium robertsii (strain ARSEF 23 / ATCC MYA-3075) (Metarhizium anisopliae (strain ARSEF 23)).